A 235-amino-acid polypeptide reads, in one-letter code: tRNA (adenine(37)-N6)-methyltransferase (235 aa).

The TsaA-like domain maps to 6-147; it reads FEQIGVIRSP…YLPFAESLPD (142 aa). Residues 23 to 25, 64 to 65, R92, and 127 to 130 each bind S-adenosyl-L-methionine; these read PRQ, HQ, and VDGT.

It belongs to the tRNA methyltransferase O family. Homodimer.

It carries out the reaction N(6)-L-threonylcarbamoyladenosine(37) in tRNA + S-adenosyl-L-methionine = N(6)-methyl,N(6)-L-threonylcarbamoyladenosine(37) in tRNA + S-adenosyl-L-homocysteine + H(+). In terms of biological role, S-adenosyl-L-methionine-dependent methyltransferase responsible for the addition of the methyl group in the formation of N6-methyl-N6-threonylcarbamoyladenosine at position 37 (m(6)t(6)A37) of the tRNA anticodon loop of tRNA(Thr)(GGU) that read codons starting with adenosine. The methyl group of m(6)t(6)A37 appears to slightly improve the efficiency of the tRNA decoding ability. The chain is tRNA (adenine(37)-N6)-methyltransferase from Escherichia coli (strain K12).